A 214-amino-acid polypeptide reads, in one-letter code: C-type lectin domain family 2 member L (214 aa).

Residues 1-56 are disordered; the sequence is MEPAREPPSRARPPPPLAARPAPAPAAPRPRSPAEAEARGPEGLLRRSGSGYEGST. Over residues 10–31 the composition is skewed to pro residues; it reads RARPPPPLAARPAPAPAAPRPR. Ser32 is modified (phosphoserine). A helical membrane pass occupies residues 69–89; sequence LLLGAIAVLLFAILVVMSILA. One can recognise a C-type lectin domain in the interval 107–209; it reads YGRKCYFFSE…CLMTRPWVCS (103 aa). 2 cysteine pairs are disulfide-bonded: Cys128-Cys208 and Cys187-Cys200.

The protein localises to the membrane. The polypeptide is C-type lectin domain family 2 member L (CLEC2L) (Homo sapiens (Human)).